Consider the following 439-residue polypeptide: Tol-Pal system protein TolB (439 aa).

The first 21 residues, 1 to 21 (MRFRLALSLLSLALFAAPAAA), serve as a signal peptide directing secretion.

The protein belongs to the TolB family. In terms of assembly, the Tol-Pal system is composed of five core proteins: the inner membrane proteins TolA, TolQ and TolR, the periplasmic protein TolB and the outer membrane protein Pal. They form a network linking the inner and outer membranes and the peptidoglycan layer.

It is found in the periplasm. Its function is as follows. Part of the Tol-Pal system, which plays a role in outer membrane invagination during cell division and is important for maintaining outer membrane integrity. The sequence is that of Tol-Pal system protein TolB from Rhizorhabdus wittichii (strain DSM 6014 / CCUG 31198 / JCM 15750 / NBRC 105917 / EY 4224 / RW1) (Sphingomonas wittichii).